Reading from the N-terminus, the 447-residue chain is tRNA (guanine(37)-N(1))-methyltransferase (447 aa).

Residues His-241, Asp-285–Leu-286, and Asp-313–Val-314 each bind S-adenosyl-L-methionine.

The protein belongs to the class I-like SAM-binding methyltransferase superfamily. TRM5/TYW2 family. In terms of assembly, monomer.

It is found in the mitochondrion matrix. Its subcellular location is the nucleus. The protein localises to the cytoplasm. The catalysed reaction is guanosine(37) in tRNA + S-adenosyl-L-methionine = N(1)-methylguanosine(37) in tRNA + S-adenosyl-L-homocysteine + H(+). Specifically methylates the N1 position of guanosine-37 in various cytoplasmic and mitochondrial tRNAs. Methylation is not dependent on the nature of the nucleoside 5' of the target nucleoside. This is the first step in the biosynthesis of wybutosine (yW), a modified base adjacent to the anticodon of tRNAs and required for accurate decoding. The sequence is that of tRNA (guanine(37)-N(1))-methyltransferase from Giardia intestinalis (strain ATCC 50803 / WB clone C6) (Giardia lamblia).